Here is a 74-residue protein sequence, read N- to C-terminus: Protein krueppel (74 aa).

C2H2-type zinc fingers lie at residues 1–4 (ERTH), 10–32 (FECSQCHKRFTRDHHLKTHMRLH), 38–60 (YHCTHCDRHFVQVANLRRHLRVH), and 66–74 (YACELCASR).

The protein belongs to the krueppel C2H2-type zinc-finger protein family.

Its subcellular location is the nucleus. Krueppel is a gap class segmentation protein. This chain is Protein krueppel (Kr), found in Euscelis plebejus (Leafhopper).